Consider the following 146-residue polypeptide: Putative pre-16S rRNA nuclease (146 aa).

The protein belongs to the YqgF nuclease family.

It localises to the cytoplasm. Could be a nuclease involved in processing of the 5'-end of pre-16S rRNA. This chain is Putative pre-16S rRNA nuclease, found in Burkholderia pseudomallei (strain 668).